The chain runs to 640 residues: Threonine--tRNA ligase (640 aa).

The TGS domain occupies 1-61 (MPIITLPDGS…ERDATLQIIT (61 aa)). Residues 242–533 (DHRRIGKQLD…LIEHYAGAFP (292 aa)) form a catalytic region. Residues Cys333, His384, and His510 each contribute to the Zn(2+) site.

It belongs to the class-II aminoacyl-tRNA synthetase family. Homodimer. It depends on Zn(2+) as a cofactor.

It is found in the cytoplasm. The catalysed reaction is tRNA(Thr) + L-threonine + ATP = L-threonyl-tRNA(Thr) + AMP + diphosphate + H(+). Functionally, catalyzes the attachment of threonine to tRNA(Thr) in a two-step reaction: L-threonine is first activated by ATP to form Thr-AMP and then transferred to the acceptor end of tRNA(Thr). Also edits incorrectly charged L-seryl-tRNA(Thr). The sequence is that of Threonine--tRNA ligase from Pseudomonas paraeruginosa (strain DSM 24068 / PA7) (Pseudomonas aeruginosa (strain PA7)).